The chain runs to 76 residues: Esculentin-2-ALb (76 aa).

An N-terminal signal peptide occupies residues Met-1–Cys-22. A propeptide spanning residues Glu-23–Arg-39 is cleaved from the precursor. Residues Cys-70 and Cys-76 are joined by a disulfide bond.

In terms of tissue distribution, expressed by the skin glands.

It localises to the secreted. In terms of biological role, antimicrobial peptide with activity against Gram-positive and Gram-negative bacteria and against fungi. Has been tested against S.aureus (MIC=1.25 ug/mL), B.pumilus (MIC=2.5 ug/mL), B.cereus (MIC=7.5 ug/mL), E.coli (MIC=12.5 ug/mL), B.dysenteriae (MIC=7.5 ug/mL), A.cacoaceticus (MIC=12.5 ug/mL), P.aeruginosa (MIC=50.0 ug/mL) and C.albicans (MIC=2.5 ug/mL). Also shows a weak hemolytic activity. The chain is Esculentin-2-ALb from Amolops loloensis (Lolokou Sucker Frog).